We begin with the raw amino-acid sequence, 258 residues long: UPF0246 protein VV0659 (258 aa).

The protein belongs to the UPF0246 family.

In Vibrio vulnificus (strain YJ016), this protein is UPF0246 protein VV0659.